We begin with the raw amino-acid sequence, 132 residues long: Small ribosomal subunit protein uS8 (132 aa).

Belongs to the universal ribosomal protein uS8 family. Part of the 30S ribosomal subunit. Contacts proteins S5 and S12.

In terms of biological role, one of the primary rRNA binding proteins, it binds directly to 16S rRNA central domain where it helps coordinate assembly of the platform of the 30S subunit. This chain is Small ribosomal subunit protein uS8, found in Streptococcus gordonii (strain Challis / ATCC 35105 / BCRC 15272 / CH1 / DL1 / V288).